The chain runs to 275 residues: Tryptophan synthase alpha chain (275 aa).

Active-site proton acceptor residues include Glu49 and Asp60.

Belongs to the TrpA family. Tetramer of two alpha and two beta chains.

The enzyme catalyses (1S,2R)-1-C-(indol-3-yl)glycerol 3-phosphate + L-serine = D-glyceraldehyde 3-phosphate + L-tryptophan + H2O. It participates in amino-acid biosynthesis; L-tryptophan biosynthesis; L-tryptophan from chorismate: step 5/5. Its function is as follows. The alpha subunit is responsible for the aldol cleavage of indoleglycerol phosphate to indole and glyceraldehyde 3-phosphate. In Nitrosomonas europaea (strain ATCC 19718 / CIP 103999 / KCTC 2705 / NBRC 14298), this protein is Tryptophan synthase alpha chain.